Consider the following 240-residue polypeptide: Glyceraldehyde 3-phosphate phosphatase (240 aa).

This sequence belongs to the HAD-like hydrolase superfamily. Mg(2+) serves as cofactor.

In terms of biological role, catalyzes the dephosphorylation of D,L-glyceraldehyde 3-phosphate in vitro. The chain is Glyceraldehyde 3-phosphate phosphatase from Pyrococcus furiosus (strain ATCC 43587 / DSM 3638 / JCM 8422 / Vc1).